Consider the following 269-residue polypeptide: Putative hydro-lyase Swoo_1731 (269 aa).

It belongs to the D-glutamate cyclase family.

The chain is Putative hydro-lyase Swoo_1731 from Shewanella woodyi (strain ATCC 51908 / MS32).